We begin with the raw amino-acid sequence, 233 residues long: RNA-free ribonuclease P (233 aa).

The protein belongs to the HARP family.

It catalyses the reaction Endonucleolytic cleavage of RNA, removing 5'-extranucleotides from tRNA precursor.. In terms of biological role, RNA-free RNase P that catalyzes the removal of the 5'-leader sequence from pre-tRNA to produce the mature 5'-terminus. The sequence is that of RNA-free ribonuclease P from Methanocaldococcus jannaschii (strain ATCC 43067 / DSM 2661 / JAL-1 / JCM 10045 / NBRC 100440) (Methanococcus jannaschii).